The sequence spans 221 residues: GTP cyclohydrolase 1 (221 aa).

Zn(2+) contacts are provided by C109, H112, and C180.

This sequence belongs to the GTP cyclohydrolase I family. In terms of assembly, toroid-shaped homodecamer, composed of two pentamers of five dimers.

It catalyses the reaction GTP + H2O = 7,8-dihydroneopterin 3'-triphosphate + formate + H(+). It functions in the pathway cofactor biosynthesis; 7,8-dihydroneopterin triphosphate biosynthesis; 7,8-dihydroneopterin triphosphate from GTP: step 1/1. The protein is GTP cyclohydrolase 1 of Blochmanniella pennsylvanica (strain BPEN).